The primary structure comprises 492 residues: Probable malate:quinone oxidoreductase 1 (492 aa).

Belongs to the MQO family. FAD serves as cofactor.

It catalyses the reaction (S)-malate + a quinone = a quinol + oxaloacetate. It functions in the pathway carbohydrate metabolism; tricarboxylic acid cycle; oxaloacetate from (S)-malate (quinone route): step 1/1. This Staphylococcus epidermidis (strain ATCC 35984 / DSM 28319 / BCRC 17069 / CCUG 31568 / BM 3577 / RP62A) protein is Probable malate:quinone oxidoreductase 1.